Consider the following 319-residue polypeptide: Ankyrin repeat domain-containing protein 1 (319 aa).

Residues 61-89 (KTEKQREAELKKKKLEQRSKLENLEDLEI) adopt a coiled-coil conformation. 5 ANK repeats span residues 152-181 (YKRT…QIEF), 185-214 (LEST…KISA), 218-247 (LLST…DLNA), 251-280 (EGDT…DLNV), and 284-315 (AGKT…KASR).

As to quaternary structure, interacts with TTN/titin and YBX1.

Its subcellular location is the nucleus. Its function is as follows. May play an important role in endothelial cell activation. May act as a nuclear transcription factor that negatively regulates the expression of cardiac genes. The protein is Ankyrin repeat domain-containing protein 1 (ANKRD1) of Bos taurus (Bovine).